Consider the following 243-residue polypeptide: Phosphoribosyl isomerase A (243 aa).

The active-site Proton acceptor is the D10. D129 serves as the catalytic Proton donor.

It belongs to the HisA/HisF family.

It is found in the cytoplasm. The catalysed reaction is 1-(5-phospho-beta-D-ribosyl)-5-[(5-phospho-beta-D-ribosylamino)methylideneamino]imidazole-4-carboxamide = 5-[(5-phospho-1-deoxy-D-ribulos-1-ylimino)methylamino]-1-(5-phospho-beta-D-ribosyl)imidazole-4-carboxamide. It carries out the reaction N-(5-phospho-beta-D-ribosyl)anthranilate = 1-(2-carboxyphenylamino)-1-deoxy-D-ribulose 5-phosphate. The protein operates within amino-acid biosynthesis; L-histidine biosynthesis; L-histidine from 5-phospho-alpha-D-ribose 1-diphosphate: step 4/9. It participates in amino-acid biosynthesis; L-tryptophan biosynthesis; L-tryptophan from chorismate: step 3/5. Functionally, involved in both the histidine and tryptophan biosynthetic pathways. The polypeptide is Phosphoribosyl isomerase A (Mycobacteroides abscessus (strain ATCC 19977 / DSM 44196 / CCUG 20993 / CIP 104536 / JCM 13569 / NCTC 13031 / TMC 1543 / L948) (Mycobacterium abscessus)).